Here is a 440-residue protein sequence, read N- to C-terminus: Chromosome partition protein MukF (440 aa).

A leucine-zipper region spans residues Leu-208 to Ile-236.

This sequence belongs to the MukF family. Interacts, and probably forms a ternary complex, with MukE and MukB via its C-terminal region. The complex formation is stimulated by calcium or magnesium. It is required for an interaction between MukE and MukB.

It is found in the cytoplasm. The protein localises to the nucleoid. In terms of biological role, involved in chromosome condensation, segregation and cell cycle progression. May participate in facilitating chromosome segregation by condensation DNA from both sides of a centrally located replisome during cell division. Not required for mini-F plasmid partitioning. Probably acts via its interaction with MukB and MukE. Overexpression results in anucleate cells. It has a calcium binding activity. The protein is Chromosome partition protein MukF of Serratia proteamaculans (strain 568).